The following is a 689-amino-acid chain: Long-chain-fatty-acid--CoA ligase 2 (689 aa).

Tyrosine 252 to valine 263 is a binding site for ATP. Positions aspartate 518 to leucine 567 match the FACS motif.

Belongs to the ATP-dependent AMP-binding enzyme family. Mg(2+) serves as cofactor.

It is found in the golgi apparatus. Its subcellular location is the vacuole membrane. It carries out the reaction a long-chain fatty acid + ATP + CoA = a long-chain fatty acyl-CoA + AMP + diphosphate. Its function is as follows. Esterification, concomitant with transport, of endogenous long-chain fatty acids into metabolically active CoA thioesters for subsequent degradation or incorporation into phospholipids. Plays an important role in the determination of viability in the stationary phase. The protein is Long-chain-fatty-acid--CoA ligase 2 (lcf2) of Schizosaccharomyces pombe (strain 972 / ATCC 24843) (Fission yeast).